Reading from the N-terminus, the 332-residue chain is 2,3-diketo-L-gulonate reductase (332 aa).

The Proton donor role is filled by His44. Residues 168 to 174 (ITMVDMS), 224 to 225 (WK), and 304 to 306 (GHE) contribute to the NAD(+) site.

This sequence belongs to the LDH2/MDH2 oxidoreductase family. DlgD subfamily. Homodimer.

It is found in the cytoplasm. The enzyme catalyses 3-dehydro-L-gulonate + NAD(+) = 2,3-dioxo-L-gulonate + NADH + H(+). It catalyses the reaction 3-dehydro-L-gulonate + NADP(+) = 2,3-dioxo-L-gulonate + NADPH + H(+). In terms of biological role, catalyzes the reduction of 2,3-diketo-L-gulonate in the presence of NADH, to form 3-keto-L-gulonate. This is 2,3-diketo-L-gulonate reductase from Escherichia coli O6:K15:H31 (strain 536 / UPEC).